The following is a 511-amino-acid chain: Prolyl 3-hydroxylase OGFOD1 (511 aa).

Residues 1–20 (MTGKRGTAAGTDGSGNKKGK) are disordered. A Fe2OG dioxygenase domain is found at 138–240 (KTVDISCAQY…RLSVSGWFHG (103 aa)). Residues His-156 and Asp-158 each contribute to the Fe cation site. Tyr-170 lines the 2-oxoglutarate pocket. His-219 contacts Fe cation. Arg-231 is a binding site for 2-oxoglutarate. Residues 372–403 (NEESDEGEGPSEPNTVSQQGASSEDDKVPSCS) form a disordered region.

Belongs to the TPA1 family. In terms of assembly, monomer. It depends on Fe(2+) as a cofactor. L-ascorbate serves as cofactor.

The protein resides in the cytoplasm. It is found in the nucleus. The enzyme catalyses [ribosomal protein uS12]-L-proline + 2-oxoglutarate + O2 = [ribosomal protein uS12]-(3S)-3-hydroxy-L-proline + succinate + CO2. Functionally, prolyl 3-hydroxylase that catalyzes 3-hydroxylation of 'Pro-62' of small ribosomal subunit uS12 (rps23), thereby regulating protein translation termination efficiency. Involved in stress granule formation. The polypeptide is Prolyl 3-hydroxylase OGFOD1 (ogfod1) (Xenopus laevis (African clawed frog)).